A 124-amino-acid polypeptide reads, in one-letter code: Snake venom vascular endothelial growth factor toxin apiscin (124 aa).

The signal sequence occupies residues 1–24 (MAAYLLAVAILFCIQGWPSGTVQG). Position 25 is a pyrrolidone carboxylic acid (Gln25). 3 disulfides stabilise this stretch: Cys38–Cys80, Cys69–Cys115, and Cys73–Cys117.

The protein belongs to the PDGF/VEGF growth factor family. Snake venom VEGF subfamily. Homodimer; disulfide-linked. Interacts with VEGF receptor-1 (FLT1) with a high affinity, whereas it binds to VEGF receptor-2 (KDR) with a low affinity. Does not bind VEGF receptor-3 (FLT4). Expressed by the venom gland.

The protein resides in the secreted. Snake venom VEGFs that may contribute to venom dispersion and prey subjugation by inducing vascular permeability and hypotension. This protein induces an increase in capillary permeability after intradermal injection, as well as a drastic hypotensive effect after intravenous injection. The hypotension is mediated by nitric oxide (NO), which is produced by VEGF-activated endothelium NO synthase. Also induces angiogenesis in vitro. Like other crotalid VEGFs, this protein interacts with VEGF receptor-1 (FLT1) with a high affinity, whereas it binds to VEGF receptor-2 (KDR) with a low affinity. The protein is Snake venom vascular endothelial growth factor toxin apiscin of Agkistrodon piscivorus piscivorus (Eastern cottonmouth).